Here is a 714-residue protein sequence, read N- to C-terminus: ATP-dependent DNA helicase DinG (714 aa).

Residues 17 to 294 (ALQDQIPDFI…TCMEQFRPKT (278 aa)) form the Helicase ATP-binding domain. 54-61 (APTGVGKT) is a binding site for ATP. Residues Cys-120, Cys-194, Cys-199, and Cys-205 each coordinate [4Fe-4S] cluster. A DEAH box motif is present at residues 248-251 (DEGH). One can recognise a Helicase C-terminal domain in the interval 517-698 (HIAEMAAYFR…VFPIEQPAVP (182 aa)).

Belongs to the helicase family. DinG subfamily. Type 1 sub-subfamily. [4Fe-4S] cluster is required as a cofactor.

It catalyses the reaction Couples ATP hydrolysis with the unwinding of duplex DNA at the replication fork by translocating in the 5'-3' direction. This creates two antiparallel DNA single strands (ssDNA). The leading ssDNA polymer is the template for DNA polymerase III holoenzyme which synthesizes a continuous strand.. It carries out the reaction ATP + H2O = ADP + phosphate + H(+). DNA-dependent ATPase and 5'-3' DNA helicase. Unwinds D-loops, R-loops, forked DNA and G-quadruplex DNA. This Salmonella typhimurium (strain LT2 / SGSC1412 / ATCC 700720) protein is ATP-dependent DNA helicase DinG.